A 572-amino-acid polypeptide reads, in one-letter code: Frizzled-7 (572 aa).

A signal peptide spans 1-32; it reads MRGPGTAASHSPLGLCALVLALLGALPTDTRA. Topologically, residues 33-254 are extracellular; it reads QPYHGEKGIS…EEERRFARLW (222 aa). One can recognise an FZ domain in the interval 44-163; that stretch reads PDHGFCQPIS…HGAGEICVGQ (120 aa). Intrachain disulfides connect cysteine 49/cysteine 110, cysteine 57/cysteine 103, cysteine 94/cysteine 131, cysteine 120/cysteine 160, and cysteine 124/cysteine 148. Residue asparagine 63 is glycosylated (N-linked (GlcNAc...) asparagine). Asparagine 164 carries an N-linked (GlcNAc...) asparagine glycan. A helical membrane pass occupies residues 255 to 275; that stretch reads VGVWSVLCCASTLFTVLTYLV. The Cytoplasmic segment spans residues 276-286; the sequence is DMRRFSYPERP. A helical membrane pass occupies residues 287 to 307; the sequence is IIFLSGCYFMVAVAHVAGFLL. Topologically, residues 308 to 334 are extracellular; sequence EDRAVCVERFSDDGYRTVAQGTKKEGC. The helical transmembrane segment at 335 to 355 threads the bilayer; sequence TILFMVLYFFGMASSIWWVIL. The Cytoplasmic segment spans residues 356–377; sequence SLTWFLAAGMKWGHEAIEANSQ. Residues 378–398 form a helical membrane-spanning segment; sequence YFHLAAWAVPAVKTITILAMG. The Extracellular segment spans residues 399-421; sequence QVDGDLLSGVCYVGLSSVDALRG. The chain crosses the membrane as a helical span at residues 422–442; it reads FVLAPLFVYLFIGTSFLLAGF. At 443 to 468 the chain is on the cytoplasmic side; that stretch reads VSLFRIRTIMKHDGTKTEKLEKLMVR. Residues 469–489 form a helical membrane-spanning segment; the sequence is IGVFSVLYTVPATIVLACYFY. At 490-526 the chain is on the extracellular side; that stretch reads EQAFREHWERTWLLQTCKSYAVPCPPGHFSPMSPDFT. The chain crosses the membrane as a helical span at residues 527-547; sequence VFMIKYLMTMIVGITTGFWIW. Residues 548 to 572 are Cytoplasmic-facing; it reads SGKTLQSWRRFYHRLSHSSKGETAV. The short motif at 550-555 is the Lys-Thr-X-X-X-Trp motif, mediates interaction with the PDZ domain of Dvl family members element; sequence KTLQSW. Positions 570-572 match the PDZ-binding motif; the sequence is TAV.

This sequence belongs to the G-protein coupled receptor Fz/Smo family. Interacts with MAGI3. Interacts with DVL1. Interacts with CCDC88C/DAPLE; the interaction displaces DVL1 from FZD7, leading to inhibition of canonical Wnt signaling and triggering of non-canonical Wnt responses. Interacts with MYOC. Binds to SDCBP; this interaction is increased by inositol trisphosphate (IP3). Interacts with glypican GPC3. Ubiquitinated by ZNRF3, leading to its degradation by the proteasome.

It localises to the cell membrane. Its subcellular location is the endosome membrane. Its function is as follows. Receptor for Wnt proteins. Most frizzled receptors are coupled to the beta-catenin canonical signaling pathway, which leads to the activation of disheveled proteins, inhibition of GSK-3 kinase, nuclear accumulation of beta-catenin and activation of Wnt target genes. A second signaling pathway involving PKC and calcium fluxes has been seen for some family members, but it is not yet clear if it represents a distinct pathway or if it can be integrated in the canonical pathway, as PKC seems to be required for Wnt-mediated inactivation of GSK-3 kinase. Both pathways seem to involve interactions with G-proteins. Activation by WNT8 induces expression of beta-catenin target genes. Following ligand activation, binds to CCDC88C/DAPLE which displaces DVL1 from FZD7 and leads to inhibition of canonical Wnt signaling, activation of G-proteins by CCDC88C and triggering of non-canonical Wnt responses. May be involved in transduction and intercellular transmission of polarity information during tissue morphogenesis and/or in differentiated tissues. This Mus musculus (Mouse) protein is Frizzled-7 (Fzd7).